An 86-amino-acid chain; its full sequence is Probable weak neurotoxin NNAM2I (86 aa).

The N-terminal stretch at 1-21 (MKTLPLTLVVVTIVCLDLGYT) is a signal peptide. Disulfide bonds link cysteine 24-cysteine 45, cysteine 27-cysteine 32, cysteine 38-cysteine 63, cysteine 67-cysteine 78, and cysteine 79-cysteine 84.

It belongs to the three-finger toxin family. Ancestral subfamily. Orphan group II sub-subfamily. In terms of tissue distribution, expressed by the venom gland.

It is found in the secreted. Functionally, binds with low affinity to muscular (alpha-1-beta-1-delta-epsilon/CHRNA1-CHRNB1-CHRND-CHRNE) and very low affinity to neuronal (alpha-7/CHRNA7) nicotinic acetylcholine receptor (nAChR). The protein is Probable weak neurotoxin NNAM2I of Naja atra (Chinese cobra).